A 150-amino-acid chain; its full sequence is Small ribosomal subunit protein uS11y (150 aa).

S19 is subject to Phosphoserine.

It belongs to the universal ribosomal protein uS11 family.

The protein resides in the cytoplasm. The chain is Small ribosomal subunit protein uS11y (RPS14B) from Arabidopsis thaliana (Mouse-ear cress).